The chain runs to 155 residues: Small ribosomal subunit protein uS7 (155 aa).

This sequence belongs to the universal ribosomal protein uS7 family. In terms of assembly, part of the 30S ribosomal subunit. Contacts proteins S9 and S11.

Its function is as follows. One of the primary rRNA binding proteins, it binds directly to 16S rRNA where it nucleates assembly of the head domain of the 30S subunit. Is located at the subunit interface close to the decoding center, probably blocks exit of the E-site tRNA. This Chlorobium phaeobacteroides (strain BS1) protein is Small ribosomal subunit protein uS7.